The primary structure comprises 103 residues: Small ribosomal subunit protein uS10 (103 aa).

It belongs to the universal ribosomal protein uS10 family. Part of the 30S ribosomal subunit.

Its function is as follows. Involved in the binding of tRNA to the ribosomes. The polypeptide is Small ribosomal subunit protein uS10 (Pseudoalteromonas translucida (strain TAC 125)).